We begin with the raw amino-acid sequence, 57 residues long: Large ribosomal subunit protein bL32 (57 aa).

Residues Met1 to Ala21 are disordered. Over residues Arg7–Ser18 the composition is skewed to basic residues.

It belongs to the bacterial ribosomal protein bL32 family.

The sequence is that of Large ribosomal subunit protein bL32 (rpmF) from Mycoplasma pneumoniae (strain ATCC 29342 / M129 / Subtype 1) (Mycoplasmoides pneumoniae).